A 122-amino-acid chain; its full sequence is Large ribosomal subunit protein uL14 (122 aa).

The protein belongs to the universal ribosomal protein uL14 family. Part of the 50S ribosomal subunit. Forms a cluster with proteins L3 and L19. In the 70S ribosome, L14 and L19 interact and together make contacts with the 16S rRNA in bridges B5 and B8.

Its function is as follows. Binds to 23S rRNA. Forms part of two intersubunit bridges in the 70S ribosome. This is Large ribosomal subunit protein uL14 from Kineococcus radiotolerans (strain ATCC BAA-149 / DSM 14245 / SRS30216).